Consider the following 276-residue polypeptide: SF-assemblin (276 aa).

Residues 1–31 (MSLRPFETPGGLSSLSPRRRDFSPTRPGTNG) are nonhelical region. The tract at residues 1–37 (MSLRPFETPGGLSSLSPRRRDFSPTRPGTNGPSAKLE) is disordered. The tract at residues 32-276 (PSAKLEHVTE…LQEGLKLVSA (245 aa)) is rod. A coiled-coil region spans residues 67–145 (LLQESLQRIE…LVRDERESRR (79 aa)).

It belongs to the SF-assemblin family.

The protein localises to the cytoplasm. It is found in the cytoskeleton. Functionally, major component of the striated microtubule-associated fibers (SMAFs; system-I-fibers). In Chlamydomonas reinhardtii (Chlamydomonas smithii), this protein is SF-assemblin.